Reading from the N-terminus, the 286-residue chain is Aspartate/glutamate leucyltransferase (286 aa).

The protein belongs to the R-transferase family. Bpt subfamily.

It localises to the cytoplasm. It carries out the reaction N-terminal L-glutamyl-[protein] + L-leucyl-tRNA(Leu) = N-terminal L-leucyl-L-glutamyl-[protein] + tRNA(Leu) + H(+). The catalysed reaction is N-terminal L-aspartyl-[protein] + L-leucyl-tRNA(Leu) = N-terminal L-leucyl-L-aspartyl-[protein] + tRNA(Leu) + H(+). Its function is as follows. Functions in the N-end rule pathway of protein degradation where it conjugates Leu from its aminoacyl-tRNA to the N-termini of proteins containing an N-terminal aspartate or glutamate. In Jannaschia sp. (strain CCS1), this protein is Aspartate/glutamate leucyltransferase.